Reading from the N-terminus, the 111-residue chain is Transcription initiation factor IIA subunit 2 (111 aa).

The protein belongs to the TFIIA subunit 2 family. As to quaternary structure, TFIIA is a heterodimer of the large unprocessed subunit 1 and a small subunit gamma. It was originally believed to be a heterotrimer of an alpha, a beta and a gamma subunit. Interacts with NCOA6 general coactivator. TFIIA forms a complex with TBP.

It localises to the nucleus. TFIIA is a component of the transcription machinery of RNA polymerase II and plays an important role in transcriptional activation. TFIIA in a complex with TBP mediates transcriptional activity. The protein is Transcription initiation factor IIA subunit 2 (gtf2a2) of Paralichthys olivaceus (Bastard halibut).